Reading from the N-terminus, the 1097-residue chain is MTTTTTTTTRVASSSSTRNNRILKDANGDIGEHLRNHIHLTNCIHLKNNMHKQSPVLTDRALMRDLIVLQRSRSLRDPSASPPAWNTPPSVVDLLPKKGDLVEGGRRSVDLKKSSRRLSALSGSSPVVNFGTSKVTPSDERSGPVSGERDSGRRVKREESSRKSYRIGDDYQNVNEVVSHGSGSKASRRLSRVNDAMVKTLSDQLNEVVVGDSDDVVSSNVRPRVRYGGGGGGGNTRGCAGGMSRPKRRKFRGTRRVRGKSRDTGGGKSEMSVASNTLPQVEKHDGEKEGFGEQNMTKACGIPFNWSRIHHRGKTFLDKAGRSLSCGMSDSKGGRKGETNERNGSDKMMIQSDDDSSSFIGSDGEALPLLVDSGENDGWVHDYSGELGIFADSLLKNDEDSDLASEGRSGEKKHKKKSHVNARHRHRQQHQSLTEKYTPKTFRDLLGQNLVVQALSNAVARRKLGLLYVFHGPNGTGKTSCARIFARALNCHSMEQPKPCGTCSSCVSHDMGKSWNIREVGPVGNYDFEKIMDLLDGNVMVSSQSPRVFIFDDCDTLSSDCWNALSKVVDRAAPRHVVFILVCSSLDVLPHVIISRCQKFFFPKLKDADIVYSLQWIASKEEIEIDKDALKLIASRSDGSLRDAEMTLEQLSLLGQRISVPLVQELVGLVSDEKLVDLLDLALSADTVNTVKNLRTIMETSVEPLALMSQLATVITDILAGSYDFTKDQHKRKFFRRQPLPKEDMEKLRQALKTLSEAEKQLRVSNDKLTWLTAALLQLAPDQNYLLQRSSTADTGGRESSDHHLDPSSDAAGGRSSGLDRRRGDSRKNRPAVEEIWLEVIEKLRVNGLREFLYKEGRIVSLNLGSAPTVHLMFSSPLTKSTAEKFRSHIMQAFEAVLESPVTIEIRCETKKDPRNNVHHHHHHPTVKDKSLPQSLALIGHDYNIDGSGRSEIVEVTESNGQRRQQQKQQEEERTEPVGSSALARARRKHLEASQSQNQSQSIVRGKVSLAHVIQQADGCSLQNGWSKRKAVSIAEKLEQENLRLEPRSRSLLCWKSSRGTRRKATRLKVRTRRARPHTLLKLVSCGKCLSTRSPTR.

Disordered stretches follow at residues 1–22 (MTTT…NNRI), 74–168 (SLRD…YRIG), 220–293 (NVRP…GFGE), 321–358 (GRSL…DSSS), and 400–436 (DSDL…LTEK). A compositionally biased stretch (polar residues) spans 10–20 (RVASSSSTRNN). Residues 95 to 113 (LPKKGDLVEGGRRSVDLKK) are compositionally biased toward basic and acidic residues. Residues 126–136 (PVVNFGTSKVT) show a composition bias toward polar residues. Residues 137–168 (PSDERSGPVSGERDSGRRVKREESSRKSYRIG) are compositionally biased toward basic and acidic residues. Positions 227–241 (YGGGGGGGNTRGCAG) are enriched in gly residues. Basic residues predominate over residues 245–259 (RPKRRKFRGTRRVRG). 2 stretches are compositionally biased toward basic and acidic residues: residues 281-291 (VEKHDGEKEGF) and 332-345 (KGGR…RNGS). Residues 346–358 (DKMMIQSDDDSSS) are compositionally biased toward low complexity. Over residues 411-429 (EKKHKKKSHVNARHRHRQQ) the composition is skewed to basic residues. Residue 472–479 (GPNGTGKT) coordinates ATP. Positions 491, 500, 503, and 506 each coordinate Zn(2+). Positions 742-770 (KEDMEKLRQALKTLSEAEKQLRVSNDKLT) form a coiled coil. Disordered stretches follow at residues 790–828 (SSTA…DSRK), 913–932 (DPRN…DKSL), and 956–1003 (VTES…SQSI). Basic and acidic residues-rich tracts occupy residues 796–807 (GGRESSDHHLDP) and 818–828 (GLDRRRGDSRK). Positions 993-1003 (ASQSQNQSQSI) are enriched in polar residues.

Belongs to the DnaX/STICHEL family.

This Arabidopsis thaliana (Mouse-ear cress) protein is Protein STICHEL-like 3.